A 707-amino-acid chain; its full sequence is Methionine--tRNA ligase (707 aa).

The short motif at 13-23 (PYANGNFHIGH) is the 'HIGH' region element. Residues cysteine 147, cysteine 150, cysteine 160, and cysteine 163 each contribute to the Zn(2+) site. Residues 344 to 348 (KMSKS) carry the 'KMSKS' region motif. Residue lysine 347 coordinates ATP. Residues 601–707 (DFAKVDLRIA…PGATPGMRIH (107 aa)) form the tRNA-binding domain.

This sequence belongs to the class-I aminoacyl-tRNA synthetase family. MetG type 1 subfamily. As to quaternary structure, homodimer. Requires Zn(2+) as cofactor.

Its subcellular location is the cytoplasm. The enzyme catalyses tRNA(Met) + L-methionine + ATP = L-methionyl-tRNA(Met) + AMP + diphosphate. Functionally, is required not only for elongation of protein synthesis but also for the initiation of all mRNA translation through initiator tRNA(fMet) aminoacylation. This Polaromonas naphthalenivorans (strain CJ2) protein is Methionine--tRNA ligase.